A 351-amino-acid chain; its full sequence is Tropomodulin-2 (351 aa).

Residue serine 25 is modified to Phosphoserine.

Belongs to the tropomodulin family. In terms of assembly, binds to the N-terminus of tropomyosin and to actin. In terms of tissue distribution, neuronal-tissue specific.

The protein resides in the cytoplasm. It is found in the cytoskeleton. Blocks the elongation and depolymerization of the actin filaments at the pointed end. The Tmod/TM complex contributes to the formation of the short actin protofilament, which in turn defines the geometry of the membrane skeleton. This is Tropomodulin-2 (Tmod2) from Mus musculus (Mouse).